Here is a 921-residue protein sequence, read N- to C-terminus: Translation initiation factor IF-2 (921 aa).

Disordered regions lie at residues 81–118 (AVAE…AAAP), 175–194 (PVVE…ANQA), and 219–301 (VAPA…KKHE). The segment covering 96 to 112 (PAAPTPPEVPAAAPAPP) has biased composition (pro residues). Low complexity predominate over residues 229–241 (RPSPAAGAPSRGA). Residues 292-301 (KKKEQPKKHE) show a composition bias toward basic and acidic residues. The region spanning 421–590 (KRPPVVTIMG…LLQADLMELK (170 aa)) is the tr-type G domain. A G1 region spans residues 430-437 (GHVDHGKT). 430–437 (GHVDHGKT) contributes to the GTP binding site. The interval 455–459 (GITQH) is G2. A G3 region spans residues 476–479 (DTPG). GTP-binding positions include 476 to 480 (DTPGH) and 530 to 533 (NKID). The tract at residues 530 to 533 (NKID) is G4. The segment at 566-568 (SAK) is G5.

The protein belongs to the TRAFAC class translation factor GTPase superfamily. Classic translation factor GTPase family. IF-2 subfamily.

It is found in the cytoplasm. One of the essential components for the initiation of protein synthesis. Protects formylmethionyl-tRNA from spontaneous hydrolysis and promotes its binding to the 30S ribosomal subunits. Also involved in the hydrolysis of GTP during the formation of the 70S ribosomal complex. The protein is Translation initiation factor IF-2 of Pelobacter propionicus (strain DSM 2379 / NBRC 103807 / OttBd1).